A 102-amino-acid chain; its full sequence is Small ribosomal subunit protein uS14m (102 aa).

This sequence belongs to the universal ribosomal protein uS14 family.

Its subcellular location is the mitochondrion. The polypeptide is Small ribosomal subunit protein uS14m (RPS14) (Paramecium tetraurelia).